Consider the following 184-residue polypeptide: Protein CPn_0803/CP_1068/CPj0803/CpB0832 (184 aa).

This sequence belongs to the chlamydial CPn_0803/CT_584/TC_0873 family.

This Chlamydia pneumoniae (Chlamydophila pneumoniae) protein is Protein CPn_0803/CP_1068/CPj0803/CpB0832.